Here is a 282-residue protein sequence, read N- to C-terminus: 4-diphosphocytidyl-2-C-methyl-D-erythritol kinase (282 aa).

Lys-9 is an active-site residue. Residue 98-108 (PMGGGLGGGSS) coordinates ATP. Residue Asp-140 is part of the active site.

The protein belongs to the GHMP kinase family. IspE subfamily. As to quaternary structure, homodimer.

It carries out the reaction 4-CDP-2-C-methyl-D-erythritol + ATP = 4-CDP-2-C-methyl-D-erythritol 2-phosphate + ADP + H(+). It participates in isoprenoid biosynthesis; isopentenyl diphosphate biosynthesis via DXP pathway; isopentenyl diphosphate from 1-deoxy-D-xylulose 5-phosphate: step 3/6. Its function is as follows. Catalyzes the phosphorylation of the position 2 hydroxy group of 4-diphosphocytidyl-2C-methyl-D-erythritol. The chain is 4-diphosphocytidyl-2-C-methyl-D-erythritol kinase from Salmonella schwarzengrund (strain CVM19633).